Reading from the N-terminus, the 109-residue chain is Parvalbumin-7 (109 aa).

Residue Ala2 is modified to N-acetylalanine. EF-hand domains are found at residues Leu39–Asp74 and Leu78–Glu109. Ca(2+) is bound by residues Asp52, Asp54, Ser56, Phe58, Glu60, Glu63, Asp91, Asp93, Asp95, Lys97, and Glu102.

This sequence belongs to the parvalbumin family.

In muscle, parvalbumin is thought to be involved in relaxation after contraction. It binds two calcium ions. This is Parvalbumin-7 (pvalb7) from Danio rerio (Zebrafish).